Reading from the N-terminus, the 553-residue chain is Putative transport protein Ent638_0015 (553 aa).

Helical transmembrane passes span 4-24 (IALTVSVLALVAVVGLWIGNI), 28-48 (GVGLGIGGVLFGGIFIGHFAE), 65-85 (FGLILFVYTIGIQVGPGFFAS), 95-115 (LFALGIVVMGGVVTAILHKLF), and 158-178 (MSYAMAYPFGICGILLTMWLV). 2 consecutive RCK C-terminal domains span residues 191–276 (KKHE…VIGQ) and 279–361 (ETSL…MVGN). A run of 6 helical transmembrane segments spans residues 371 to 391 (MLPVFIGIGLGVLLGSIPLYV), 403 to 425 (AGGPLIMALILGRIGCIGKLYWF), 439 to 459 (IVLFLSVVGLKSGGDFIDTLA), 464 to 484 (ISWIGYGFFITAVPLLTIGIL), 493 to 513 (YLTLCGMLAGSMTDPPALAFA), and 533 to 553 (LVMFLRIITPQLLAVLFWGMG).

It belongs to the AAE transporter (TC 2.A.81) family. YidE subfamily.

The protein resides in the cell membrane. This Enterobacter sp. (strain 638) protein is Putative transport protein Ent638_0015.